The following is a 188-amino-acid chain: Putative manganese efflux pump MntP (188 aa).

6 helical membrane-spanning segments follow: residues 1–21 (MLIQILLIGVSVSMDTFAVSI), 40–60 (LWFGGFQALFPLLGYFAASTF), 64–84 (VTAVDHWIIFGLLALIGGNMV), 105–127 (HMLPLAVACSIDAVAVGVSFAFM), 131–153 (IWLSVVIIGITTGLFSAAGLYIG), and 166–186 (IAGGVVLILIGLKVLFEHLGF).

Belongs to the MntP (TC 9.B.29) family.

The protein resides in the cell membrane. Probably functions as a manganese efflux pump. This chain is Putative manganese efflux pump MntP, found in Bifidobacterium adolescentis (strain ATCC 15703 / DSM 20083 / NCTC 11814 / E194a).